Reading from the N-terminus, the 384-residue chain is S-adenosylmethionine synthase (384 aa).

Histidine 15 is a binding site for ATP. Mg(2+) is bound at residue aspartate 17. Position 43 (glutamate 43) interacts with K(+). Positions 56 and 99 each coordinate L-methionine. The interval 99–109 (QSPDINQGVDR) is flexible loop. ATP-binding positions include 164 to 166 (DAK), 230 to 231 (RF), aspartate 239, 245 to 246 (RK), alanine 262, and lysine 266. L-methionine is bound at residue aspartate 239. Lysine 270 is a binding site for L-methionine.

It belongs to the AdoMet synthase family. As to quaternary structure, homotetramer; dimer of dimers. Mg(2+) is required as a cofactor. The cofactor is K(+).

It localises to the cytoplasm. It carries out the reaction L-methionine + ATP + H2O = S-adenosyl-L-methionine + phosphate + diphosphate. Its pathway is amino-acid biosynthesis; S-adenosyl-L-methionine biosynthesis; S-adenosyl-L-methionine from L-methionine: step 1/1. In terms of biological role, catalyzes the formation of S-adenosylmethionine (AdoMet) from methionine and ATP. The overall synthetic reaction is composed of two sequential steps, AdoMet formation and the subsequent tripolyphosphate hydrolysis which occurs prior to release of AdoMet from the enzyme. The sequence is that of S-adenosylmethionine synthase from Salmonella choleraesuis (strain SC-B67).